The sequence spans 136 residues: Large ribosomal subunit protein uL16c (136 aa).

Belongs to the universal ribosomal protein uL16 family. Part of the 50S ribosomal subunit.

The protein localises to the plastid. The protein resides in the chloroplast. In Illicium oligandrum (Star anise), this protein is Large ribosomal subunit protein uL16c.